We begin with the raw amino-acid sequence, 317 residues long: Transaldolase (317 aa).

Lys-126 acts as the Schiff-base intermediate with substrate in catalysis.

This sequence belongs to the transaldolase family. Type 1 subfamily. As to quaternary structure, homodimer.

The protein localises to the cytoplasm. It catalyses the reaction D-sedoheptulose 7-phosphate + D-glyceraldehyde 3-phosphate = D-erythrose 4-phosphate + beta-D-fructose 6-phosphate. It functions in the pathway carbohydrate degradation; pentose phosphate pathway; D-glyceraldehyde 3-phosphate and beta-D-fructose 6-phosphate from D-ribose 5-phosphate and D-xylulose 5-phosphate (non-oxidative stage): step 2/3. Functionally, transaldolase is important for the balance of metabolites in the pentose-phosphate pathway. This chain is Transaldolase, found in Burkholderia orbicola (strain MC0-3).